The following is a 325-amino-acid chain: Probable NADH kinase (325 aa).

This sequence belongs to the NAD kinase family. Homodimer.

Its subcellular location is the cytoplasm. It carries out the reaction NADH + ATP = ADP + NADPH + H(+). In terms of biological role, key source of the cellular reductant NADPH which is an important antioxidant factor. The polypeptide is Probable NADH kinase (Oryza sativa subsp. japonica (Rice)).